Reading from the N-terminus, the 408-residue chain is Succinylornithine transaminase (408 aa).

Residue Lys-252 is modified to N6-(pyridoxal phosphate)lysine.

This sequence belongs to the class-III pyridoxal-phosphate-dependent aminotransferase family. AstC subfamily. Pyridoxal 5'-phosphate is required as a cofactor.

It carries out the reaction N(2)-succinyl-L-ornithine + 2-oxoglutarate = N-succinyl-L-glutamate 5-semialdehyde + L-glutamate. It participates in amino-acid degradation; L-arginine degradation via AST pathway; L-glutamate and succinate from L-arginine: step 3/5. Catalyzes the transamination of N(2)-succinylornithine and alpha-ketoglutarate into N(2)-succinylglutamate semialdehyde and glutamate. Can also act as an acetylornithine aminotransferase. The sequence is that of Succinylornithine transaminase from Salmonella paratyphi B (strain ATCC BAA-1250 / SPB7).